The sequence spans 340 residues: Ketol-acid reductoisomerase (NADP(+)) (340 aa).

One can recognise a KARI N-terminal Rossmann domain in the interval 3–183; it reads INVYYDKDCD…GGGRTGIIET (181 aa). NADP(+)-binding positions include 26–29, Ser-54, and 84–87; these read FGSQ and DELQ. Residue His-109 is part of the active site. Gly-135 provides a ligand contact to NADP(+). Residues 184 to 329 enclose the KARI C-terminal knotted domain; that stretch reads TFKDETETDL…KKLRAMMPWI (146 aa). 4 residues coordinate Mg(2+): Asp-192, Glu-196, Glu-228, and Glu-232. A substrate-binding site is contributed by Ser-253.

Belongs to the ketol-acid reductoisomerase family. Mg(2+) serves as cofactor.

The catalysed reaction is (2R)-2,3-dihydroxy-3-methylbutanoate + NADP(+) = (2S)-2-acetolactate + NADPH + H(+). It carries out the reaction (2R,3R)-2,3-dihydroxy-3-methylpentanoate + NADP(+) = (S)-2-ethyl-2-hydroxy-3-oxobutanoate + NADPH + H(+). It participates in amino-acid biosynthesis; L-isoleucine biosynthesis; L-isoleucine from 2-oxobutanoate: step 2/4. Its pathway is amino-acid biosynthesis; L-valine biosynthesis; L-valine from pyruvate: step 2/4. In terms of biological role, involved in the biosynthesis of branched-chain amino acids (BCAA). Catalyzes an alkyl-migration followed by a ketol-acid reduction of (S)-2-acetolactate (S2AL) to yield (R)-2,3-dihydroxy-isovalerate. In the isomerase reaction, S2AL is rearranged via a Mg-dependent methyl migration to produce 3-hydroxy-3-methyl-2-ketobutyrate (HMKB). In the reductase reaction, this 2-ketoacid undergoes a metal-dependent reduction by NADPH to yield (R)-2,3-dihydroxy-isovalerate. This Campylobacter concisus (strain 13826) protein is Ketol-acid reductoisomerase (NADP(+)).